The sequence spans 299 residues: Circadian clock oscillator protein KaiA (299 aa).

The KaiA N-terminal domain occupies 1–169 (MVSKLSLYLV…RLAEKLRERL (169 aa)). The segment at 3 to 135 (SKLSLYLVTP…LHLAPSCALS (133 aa)) is psR domain, binds oxidized quinones. Positions 170-178 (GYLGVYYKR) are flexible linker. One can recognise a KaiA C-terminal domain in the interval 179–287 (NPKYFYRSLS…CEMYRRSIPR (109 aa)).

As to quaternary structure, homodimer. The KaiABC complex composition changes during the circadian cycle to control KaiC phosphorylation. Complexes KaiC(6), KaiA(2-4):KaiC(6), KaiB(6):KaiC(6) and KaiC(6):KaiB(6):KaiA(12) are among the most important forms, many form cooperatively. KaiA and CikA bind to the same region of the KaiB(fs) form and therefore compete.

Its function is as follows. Key component of the KaiABC oscillator complex, which constitutes the main circadian regulator in cyanobacteria. Complex composition changes during the circadian cycle to control KaiC phosphorylation. KaiA stimulates KaiC autophosphorylation, while KaiB sequesters KaiA, leading to KaiC autodephosphorylation. KaiA binding to the KaiC CII domain during the subjective day yields KaiA(2-4):KaiC(6) complexes which stimulate KaiC autophosphorylation. Phospho-Ser-431 KaiC accumulation triggers binding of KaiB during the subjective night to form the KaiB(6):KaiC(6) complex, leading to changes in the output regulators CikA and SasA. KaiB(6):KaiC(6) formation exposes a site for KaiA binding on KaiB that sequesters KaiA from KaiC's CII domain, making the KaiC(6):KaiB(6):KaiA(12) complex resulting in KaiC autodephosphorylation. Complete dephosphorylation of KaiC leads to dissociation of KaiA(2):KaiB(1), completing 1 cycle of the Kai oscillator. In terms of biological role, binds oxidized quinones via the N-terminal PsR domain, allowing it to sense redox changes and possibly mediate clock input. The polypeptide is Circadian clock oscillator protein KaiA (Picosynechococcus sp. (strain ATCC 27264 / PCC 7002 / PR-6) (Agmenellum quadruplicatum)).